The chain runs to 230 residues: 5'-methylthioadenosine/S-adenosylhomocysteine nucleosidase (230 aa).

Glu12 functions as the Proton acceptor in the catalytic mechanism. Substrate-binding positions include Gly78, Ile152, and 173–174; that span reads ME. Residue Asp197 is the Proton donor of the active site.

The protein belongs to the PNP/UDP phosphorylase family. MtnN subfamily.

The catalysed reaction is S-adenosyl-L-homocysteine + H2O = S-(5-deoxy-D-ribos-5-yl)-L-homocysteine + adenine. The enzyme catalyses S-methyl-5'-thioadenosine + H2O = 5-(methylsulfanyl)-D-ribose + adenine. It carries out the reaction 5'-deoxyadenosine + H2O = 5-deoxy-D-ribose + adenine. Its pathway is amino-acid biosynthesis; L-methionine biosynthesis via salvage pathway; S-methyl-5-thio-alpha-D-ribose 1-phosphate from S-methyl-5'-thioadenosine (hydrolase route): step 1/2. In terms of biological role, catalyzes the irreversible cleavage of the glycosidic bond in both 5'-methylthioadenosine (MTA) and S-adenosylhomocysteine (SAH/AdoHcy) to adenine and the corresponding thioribose, 5'-methylthioribose and S-ribosylhomocysteine, respectively. Also cleaves 5'-deoxyadenosine, a toxic by-product of radical S-adenosylmethionine (SAM) enzymes, into 5-deoxyribose and adenine. This is 5'-methylthioadenosine/S-adenosylhomocysteine nucleosidase from Actinobacillus succinogenes (strain ATCC 55618 / DSM 22257 / CCUG 43843 / 130Z).